Here is a 386-residue protein sequence, read N- to C-terminus: Homeobox protein Hox-A13 (386 aa).

A DNA-binding region (homeobox) is located at residues 320 to 379 (GRKKRVPYTKVQLKELEREYATNKFITKDKRRRISATTNLSERQVTIWFQNRRVKEKKVI).

The protein belongs to the Abd-B homeobox family. Binds DNA as a homodimer. Interacts with MEIS1, MEIS2 and MEIS3.

The protein localises to the nucleus. Its function is as follows. Sequence-specific, AT-rich binding transcription factor which is part of a developmental regulatory system that provides cells with specific positional identities on the anterior-posterior axis. The chain is Homeobox protein Hox-A13 (Hoxa13) from Mus musculus (Mouse).